Consider the following 298-residue polypeptide: ATP synthase gamma chain (298 aa).

This sequence belongs to the ATPase gamma chain family. F-type ATPases have 2 components, CF(1) - the catalytic core - and CF(0) - the membrane proton channel. CF(1) has five subunits: alpha(3), beta(3), gamma(1), delta(1), epsilon(1). CF(0) has three main subunits: a, b and c.

It localises to the cell inner membrane. Functionally, produces ATP from ADP in the presence of a proton gradient across the membrane. The gamma chain is believed to be important in regulating ATPase activity and the flow of protons through the CF(0) complex. The protein is ATP synthase gamma chain of Granulibacter bethesdensis (strain ATCC BAA-1260 / CGDNIH1).